A 56-amino-acid chain; its full sequence is Large ribosomal subunit protein bL32A (56 aa).

The disordered stretch occupies residues 1–56 (MAVPARRTSKAKKNKRRTHKGLTAPGLSRDSETGEYRMSHRISPDGTYKGRTIIEK). Basic residues predominate over residues 7 to 20 (RTSKAKKNKRRTHK). Basic and acidic residues predominate over residues 29-38 (RDSETGEYRM).

Belongs to the bacterial ribosomal protein bL32 family.

The protein is Large ribosomal subunit protein bL32A (rpmF1) of Listeria innocua serovar 6a (strain ATCC BAA-680 / CLIP 11262).